An 81-amino-acid chain; its full sequence is Acyl carrier protein (81 aa).

In terms of domain architecture, Carrier spans 2–80; it reads ASKDEILAGL…DAVNFIDNAQ (79 aa). Ser40 is subject to O-(pantetheine 4'-phosphoryl)serine.

This sequence belongs to the acyl carrier protein (ACP) family. Post-translationally, 4'-phosphopantetheine is transferred from CoA to a specific serine of apo-ACP by AcpS. This modification is essential for activity because fatty acids are bound in thioester linkage to the sulfhydryl of the prosthetic group.

It is found in the cytoplasm. Its pathway is lipid metabolism; fatty acid biosynthesis. In terms of biological role, carrier of the growing fatty acid chain in fatty acid biosynthesis. This chain is Acyl carrier protein, found in Kocuria rhizophila (strain ATCC 9341 / DSM 348 / NBRC 103217 / DC2201).